The primary structure comprises 319 residues: G-protein coupled receptor 171 (319 aa).

Topologically, residues 1-21 (MTNSSFFCPVYKDLEPFTYFF) are extracellular. Asn3 carries N-linked (GlcNAc...) asparagine glycosylation. Residues 22–42 (YLVFLVGIIGSCFATWAFIQK) traverse the membrane as a helical segment. The Cytoplasmic segment spans residues 43-48 (NTNHRC). The helical transmembrane segment at 49-69 (VSIYLINLLTADFLLTLALPV) threads the bilayer. Topologically, residues 70-89 (KIVVDLGVAPWKLKIFHCQV) are extracellular. A helical transmembrane segment spans residues 90–110 (TACLIYINMYLSIIFLAFVSI). Over 111–132 (DRCLQLTHSCKIYRIQEPGFAK) the chain is Cytoplasmic. A helical membrane pass occupies residues 133–153 (MISTVVWLMVLLIMVPNMMIP). Over 154–181 (IKDIKEKSNVGCMEFKKEFGRNWHLLTN) the chain is Extracellular. A helical membrane pass occupies residues 182–202 (FICVAIFLNFSAIILISNCLV). Residues 203–224 (IRQLYRNKDNENYPNVKKALIN) are Cytoplasmic-facing. The helical transmembrane segment at 225-245 (ILLVTTGYIICFVPYHIVRIP) threads the bilayer. The Extracellular segment spans residues 246–268 (YTLSQTEVITDCSTRISLFKAKE). Residues 269–289 (ATLLLAVSNLCFDPILYYHLS) form a helical membrane-spanning segment. The Cytoplasmic portion of the chain corresponds to 290 to 319 (KAFRSKVTETFASPKETKAQKEKLRCENNA).

This sequence belongs to the G-protein coupled receptor 1 family. In terms of tissue distribution, expressed in both T-cell subsets and natural killer cells, while it is undetectable in B cells or CD14(+) monocytes. Expressed in peripheral blood mononuclear cells (PBMC) and Jurkat cells (at protein level).

The protein resides in the cell membrane. Functionally, G-protein coupled receptor for Big LEN, a 16-amino acid neuropeptide produced from the precursor protein, proSAAS (encoded by PCSK1N). Acts through a G(i)-alpha-mediated pathway in response to Big LEN. Big LEN-GPR171 system plays an important role in regulating feeding and metabolism. Also plays a role in modulating fear and anxiety-like behaviors in the basolateral amygdala. Big LEN-GPR171 modulates the mu-type opioid receptor signaling and antinociception. Acts as a negative regulator T cell function. This is G-protein coupled receptor 171 from Homo sapiens (Human).